The sequence spans 247 residues: Carboxy-S-adenosyl-L-methionine synthase (247 aa).

Residues Tyr-40, 65–67 (GSS), 90–91 (DN), 122–123 (DI), Asn-137, and Arg-204 each bind S-adenosyl-L-methionine.

The protein belongs to the class I-like SAM-binding methyltransferase superfamily. Cx-SAM synthase family. In terms of assembly, homodimer.

The catalysed reaction is prephenate + S-adenosyl-L-methionine = carboxy-S-adenosyl-L-methionine + 3-phenylpyruvate + H2O. Catalyzes the conversion of S-adenosyl-L-methionine (SAM) to carboxy-S-adenosyl-L-methionine (Cx-SAM). This is Carboxy-S-adenosyl-L-methionine synthase from Pseudomonas fluorescens (strain SBW25).